Consider the following 121-residue polypeptide: Small ribosomal subunit protein uS13 (121 aa).

A disordered region spans residues 98 to 121 (RGQKTRNNAHTVKGKPKSIAGKKK). The span at 109-121 (VKGKPKSIAGKKK) shows a compositional bias: basic residues.

This sequence belongs to the universal ribosomal protein uS13 family. As to quaternary structure, part of the 30S ribosomal subunit. Forms a loose heterodimer with protein S19. Forms two bridges to the 50S subunit in the 70S ribosome.

Functionally, located at the top of the head of the 30S subunit, it contacts several helices of the 16S rRNA. In the 70S ribosome it contacts the 23S rRNA (bridge B1a) and protein L5 of the 50S subunit (bridge B1b), connecting the 2 subunits; these bridges are implicated in subunit movement. Contacts the tRNAs in the A and P-sites. In Phytoplasma australiense, this protein is Small ribosomal subunit protein uS13.